The chain runs to 274 residues: MRKVAIYGKGGIGKSTTTQNTVAGLAEAGKKVMVVGCDPKADSTRLLLGGLQQKTVLDTLREEGEEVELEDIIKEGYKGSRCTESGGPEPGVGCAGRGIITSVNLLEQLGAYDDEWNLDYVFYDVLGDVVCGGFAMPIRDGKAEEIYIVCSGEMMAMYAANNICKGILKYADAGGVRLGGLICNSRKVDNEREMIEELARRIGTQMIHFVPRDNFVQRAEINRKTVIDYDPTHPQADEYRALARKIDENKMFVIPKPLEIDELESLLIEFGIAN.

8 to 15 (GKGGIGKS) is an ATP binding site. Cys94 serves as a coordination point for [4Fe-4S] cluster. ADP-ribosylarginine; by dinitrogenase reductase ADP-ribosyltransferase is present on Arg97. Cys131 contributes to the [4Fe-4S] cluster binding site.

Belongs to the NifH/BchL/ChlL family. As to quaternary structure, homodimer. It depends on [4Fe-4S] cluster as a cofactor. In terms of processing, the reversible ADP-ribosylation of Arg-97 inactivates the nitrogenase reductase and regulates nitrogenase activity.

The catalysed reaction is N2 + 8 reduced [2Fe-2S]-[ferredoxin] + 16 ATP + 16 H2O = H2 + 8 oxidized [2Fe-2S]-[ferredoxin] + 2 NH4(+) + 16 ADP + 16 phosphate + 6 H(+). Its function is as follows. The key enzymatic reactions in nitrogen fixation are catalyzed by the nitrogenase complex, which has 2 components: the iron protein and the molybdenum-iron protein. This Chlorobaculum parvum (strain DSM 263 / NCIMB 8327) (Chlorobium vibrioforme subsp. thiosulfatophilum) protein is Nitrogenase iron protein.